We begin with the raw amino-acid sequence, 1190 residues long: DNA-directed RNA polymerase subunit beta (1190 aa).

This sequence belongs to the RNA polymerase beta chain family. In terms of assembly, the RNAP catalytic core consists of 2 alpha, 1 beta, 1 beta' and 1 omega subunit. When a sigma factor is associated with the core the holoenzyme is formed, which can initiate transcription.

The enzyme catalyses RNA(n) + a ribonucleoside 5'-triphosphate = RNA(n+1) + diphosphate. Its function is as follows. DNA-dependent RNA polymerase catalyzes the transcription of DNA into RNA using the four ribonucleoside triphosphates as substrates. The polypeptide is DNA-directed RNA polymerase subunit beta (Streptococcus suis (strain 98HAH33)).